The chain runs to 342 residues: viral G-protein coupled receptor (342 aa).

Topologically, residues Met-1–Val-51 are extracellular. N-linked (GlcNAc...) asparagine; by host glycosylation is found at Asn-18, Asn-22, and Asn-31. Residues Gly-52–Phe-72 traverse the membrane as a helical segment. Over Cys-73 to Asn-92 the chain is Cytoplasmic. Residues Ser-93–Ile-113 traverse the membrane as a helical segment. Topologically, residues Ser-114 to Glu-121 are extracellular. A helical transmembrane segment spans residues Ile-122–Val-142. Over Arg-143–Ser-159 the chain is Cytoplasmic. Residues Leu-160 to Cys-180 traverse the membrane as a helical segment. At Arg-181–Thr-217 the chain is on the extracellular side. The helical transmembrane segment at Ala-218–Val-238 threads the bilayer. Residues Arg-239 to Gly-251 lie on the Cytoplasmic side of the membrane. The helical transmembrane segment at Val-252 to Leu-272 threads the bilayer. Residues Leu-273 to Asn-293 are Extracellular-facing. Residues Val-294–Tyr-314 form a helical membrane-spanning segment. Topologically, residues Ser-315–Thr-342 are cytoplasmic.

The protein belongs to the G-protein coupled receptor 1 family. Interacts with protein K7; this interaction promotes vGPCR proteasomal degradation. Interacts with host CADM1; this interaction is essential for chronic NF-kappa-B activation.

The protein resides in the host cell membrane. Functionally, receptor that signals constitutively via several signaling pathways including PI3K/AKT as well as mitogen- and stress-activated/MAP kinases. Promotes host cell proliferation and survival, modulates cell migration, stimulates angiogenesis, and recruits inflammatory cells, both in expressing cells and in neighboring cells. Maintains chronic activation of NF-kappa-B via interaction with host CADM1. This chain is viral G-protein coupled receptor (ORF74), found in Human herpesvirus 8 type P (isolate GK18) (HHV-8).